A 236-amino-acid polypeptide reads, in one-letter code: Potassium/proton antiporter CemA (236 aa).

4 helical membrane-spanning segments follow: residues 18-38, 114-134, 161-181, and 196-216; these read YIIS…FLVL, IAHV…LINA, LILF…KILI, and FIFL…KYWI.

Belongs to the CemA family.

The protein localises to the plastid. The protein resides in the chloroplast inner membrane. It catalyses the reaction K(+)(in) + H(+)(out) = K(+)(out) + H(+)(in). In terms of biological role, contributes to K(+)/H(+) antiport activity by supporting proton efflux to control proton extrusion and homeostasis in chloroplasts in a light-dependent manner to modulate photosynthesis. Prevents excessive induction of non-photochemical quenching (NPQ) under continuous-light conditions. Indirectly promotes efficient inorganic carbon uptake into chloroplasts. This Mesostigma viride (Green alga) protein is Potassium/proton antiporter CemA.